Reading from the N-terminus, the 502-residue chain is Ubiquilin (502 aa).

The 76-residue stretch at 8–83 folds into the Ubiquitin-like domain; the sequence is IKVHVKSPSN…VHLVIRNQAR (76 aa). The span at 84–115 shows a compositional bias: low complexity; the sequence is PTPAPAAATPTASSAPSSNPTPSSQPNPTNNP. A disordered region spans residues 84 to 136; that stretch reads PTPAPAAATPTASSAPSSNPTPSSQPNPTNNPFAAMGGMGSPADILNNPDAMR. STI1 domains lie at 124–157 and 161–200; these read SPAD…MRTI and NPQF…FQEM. Polar residues predominate over residues 235–251; the sequence is SATNSLSGNPFASLRGD. Residues 235–294 form a disordered region; the sequence is SATNSLSGNPFASLRGDQSSEPRVDRAGQENNEALPNPWASNANQATNNQSNNRSADFNS. Basic and acidic residues predominate over residues 252 to 262; that stretch reads QSSEPRVDRAG. The segment covering 274–290 has biased composition (low complexity); that stretch reads ASNANQATNNQSNNRSA. STI1 domains are found at residues 289 to 327 and 351 to 387; these read SADF…INSI and NPQI…SEAF. The 47-residue stretch at 455 to 501 folds into the UBA domain; that stretch reads PVNPEQTYASQLEQLQSMGFSDRARNVAALTATFGDLNAAVERLLNS.

Expressed in the pharynx, hypodermis, intestine and head neurons. Upon ER stress, expressed predominantly in pharyngeal muscle, hypodermis and intestine.

Its function is as follows. May play a role in the ER-associated protein degradation pathway (ERAD) possibly via its interaction with ER-localized proteins ubxn-4 and cdc-48.1 and/or cdc48.2, providing a link between the polyubiquitinated ERAD substrates and the proteasome. Also plays an important role in the regulation of other protein degradation mechanisms and pathways including ubiquitin-proteasome system (UPS) and autophagy. Mediates the proteasomal targeting of misfolded or accumulated proteins for degradation by binding (via UBA domain) to their polyubiquitin chains and by interacting (via ubiquitin-like domain) with the subunits of the proteasome. Collaborates with POST (F36D4.5) in the export of ubiquitinated proteins from the nucleus to the cytoplasm. Also acts as a regulator of DNA repair by inhibiting homologous recombination repair, thereby redirecting double-strand break repair toward non-homologous end joining (NHEJ). This chain is Ubiquilin, found in Caenorhabditis elegans.